The chain runs to 350 residues: tRNA uridine(34) hydroxylase (350 aa).

Residues 146–240 (DDPDALFIDM…YARKAREQGL (95 aa)) form the Rhodanese domain. Cys-200 acts as the Cysteine persulfide intermediate in catalysis.

Belongs to the TrhO family.

It carries out the reaction uridine(34) in tRNA + AH2 + O2 = 5-hydroxyuridine(34) in tRNA + A + H2O. Its function is as follows. Catalyzes oxygen-dependent 5-hydroxyuridine (ho5U) modification at position 34 in tRNAs, the first step in 5-carboxymethoxyuridine (cmo5U) biosynthesis. May be part of an alternate pathway, which is able to bypass cmo5U biogenesis in a subset of tRNAs under aerobic conditions. In Escherichia coli O81 (strain ED1a), this protein is tRNA uridine(34) hydroxylase.